Consider the following 237-residue polypeptide: tRNA1(Val) (adenine(37)-N6)-methyltransferase (237 aa).

It belongs to the methyltransferase superfamily. tRNA (adenine-N(6)-)-methyltransferase family.

It is found in the cytoplasm. It carries out the reaction adenosine(37) in tRNA1(Val) + S-adenosyl-L-methionine = N(6)-methyladenosine(37) in tRNA1(Val) + S-adenosyl-L-homocysteine + H(+). In terms of biological role, specifically methylates the adenine in position 37 of tRNA(1)(Val) (anticodon cmo5UAC). In Bacteroides thetaiotaomicron (strain ATCC 29148 / DSM 2079 / JCM 5827 / CCUG 10774 / NCTC 10582 / VPI-5482 / E50), this protein is tRNA1(Val) (adenine(37)-N6)-methyltransferase.